The primary structure comprises 202 residues: Recombination protein RecR (202 aa).

The segment at 56 to 71 (CRVCGNLDSADPCSVC) adopts a C4-type zinc-finger fold. In terms of domain architecture, Toprim spans 79–179 (GLICVVESVG…SVTRLAQGIP (101 aa)).

It belongs to the RecR family.

Its function is as follows. May play a role in DNA repair. It seems to be involved in an RecBC-independent recombinational process of DNA repair. It may act with RecF and RecO. The protein is Recombination protein RecR of Granulibacter bethesdensis (strain ATCC BAA-1260 / CGDNIH1).